The following is a 344-amino-acid chain: Arginine N-succinyltransferase (344 aa).

Leu125 provides a ligand contact to succinyl-CoA. His229 (proton donor) is an active-site residue.

This sequence belongs to the arginine N-succinyltransferase family.

It carries out the reaction succinyl-CoA + L-arginine = N(2)-succinyl-L-arginine + CoA + H(+). Its pathway is amino-acid degradation; L-arginine degradation via AST pathway; L-glutamate and succinate from L-arginine: step 1/5. In terms of biological role, catalyzes the transfer of succinyl-CoA to arginine to produce N(2)-succinylarginine. This chain is Arginine N-succinyltransferase, found in Escherichia coli O17:K52:H18 (strain UMN026 / ExPEC).